The following is a 239-amino-acid chain: 1-(5-phosphoribosyl)-5-[(5-phosphoribosylamino)methylideneamino] imidazole-4-carboxamide isomerase (239 aa).

D8 (proton acceptor) is an active-site residue. Residue D130 is the Proton donor of the active site.

This sequence belongs to the HisA/HisF family.

The protein localises to the cytoplasm. The catalysed reaction is 1-(5-phospho-beta-D-ribosyl)-5-[(5-phospho-beta-D-ribosylamino)methylideneamino]imidazole-4-carboxamide = 5-[(5-phospho-1-deoxy-D-ribulos-1-ylimino)methylamino]-1-(5-phospho-beta-D-ribosyl)imidazole-4-carboxamide. Its pathway is amino-acid biosynthesis; L-histidine biosynthesis; L-histidine from 5-phospho-alpha-D-ribose 1-diphosphate: step 4/9. The polypeptide is 1-(5-phosphoribosyl)-5-[(5-phosphoribosylamino)methylideneamino] imidazole-4-carboxamide isomerase (Streptococcus thermophilus (strain ATCC BAA-491 / LMD-9)).